The following is a 1547-amino-acid chain: Transposon Ty3-G Gag-Pol polyprotein (1547 aa).

Serine 2 carries the N-acetylserine modification. The CCHC-type zinc finger occupies 265-282; sequence RLCFYCKKEGHRLNECRA. Residue aspartate 336 is the For protease activity; shared with dimeric partner of the active site. Positions 620–797 constitute a Reverse transcriptase domain; that stretch reads LDNKFIVPSK…EETEFLGYSI (178 aa). The Mg(2+) site is built by aspartate 686, aspartate 748, aspartate 749, aspartate 893, glutamate 936, and aspartate 961. The RNase H Ty3/gyspy-type domain maps to 893–1011; sequence DASKDGIGAV…VADAISRAVY (119 aa). The tract at residues 1106–1145 is integrase-type zinc finger-like; it reads HTLFGGHFGVTVTLAKISPIYYWPKLQHSIIQYIRTCVQC. The 166-residue stretch at 1159 to 1324 folds into the Integrase catalytic domain; the sequence is LQPLPIAEGR…SPFEIDLGYL (166 aa). Mg(2+) contacts are provided by aspartate 1175 and aspartate 1236.

The protease is a homodimer, whose active site consists of two apposed aspartic acid residues. In terms of processing, initially, virus-like particles (VLPs) are composed of the structural unprocessed proteins Gag and Gag-Pol, and also contain the host initiator methionine tRNA (tRNA(i)-Met) which serves as a primer for minus-strand DNA synthesis, and a dimer of genomic Ty RNA. Processing of the polyproteins occurs within the particle and proceeds by an ordered pathway, called maturation. First, the protease (PR) is released by autocatalytic cleavage of the Gag-Pol polyprotein, and this cleavage is a prerequisite for subsequent processing at the remaining sites to release the mature structural and catalytic proteins. Maturation takes place prior to the RT reaction and is required to produce transposition-competent VLPs.

It is found in the cytoplasm. It localises to the nucleus. The enzyme catalyses DNA(n) + a 2'-deoxyribonucleoside 5'-triphosphate = DNA(n+1) + diphosphate. It carries out the reaction Endonucleolytic cleavage to 5'-phosphomonoester.. In terms of biological role, capsid protein (CA) is the structural component of the virus-like particle (VLP), forming the shell that encapsulates the genomic RNA-nucleocapsid complex. Functionally, nucleocapsid protein p11 (NC) forms the nucleocore that coats the retro-elements dimeric RNA. Binds these RNAs through its zinc fingers. Promotes primer tRNA(i)-Met annealing to the multipartite primer-binding site (PBS), dimerization of Ty3 RNA and initiation of reverse transcription. Its function is as follows. The aspartyl protease (PR) mediates the proteolytic cleavages of the Gag and Gag-Pol polyproteins after assembly of the VLP. Reverse transcriptase/ribonuclease H (RT) is a multifunctional enzyme that catalyzes the conversion of the retro-elements RNA genome into dsDNA within the VLP. The enzyme displays a DNA polymerase activity that can copy either DNA or RNA templates, and a ribonuclease H (RNase H) activity that cleaves the RNA strand of RNA-DNA heteroduplexes during plus-strand synthesis and hydrolyzes RNA primers. The conversion leads to a linear dsDNA copy of the retrotransposon that includes long terminal repeats (LTRs) at both ends. In terms of biological role, integrase (IN) targets the VLP to the nucleus, where a subparticle preintegration complex (PIC) containing at least integrase and the newly synthesized dsDNA copy of the retrotransposon must transit the nuclear membrane. Once in the nucleus, integrase performs the integration of the dsDNA into the host genome. The sequence is that of Transposon Ty3-G Gag-Pol polyprotein (TY3B-G) from Saccharomyces cerevisiae (strain ATCC 204508 / S288c) (Baker's yeast).